Here is a 271-residue protein sequence, read N- to C-terminus: Orotidine 5'-phosphate decarboxylase (271 aa).

The active-site Proton donor is the K95.

This sequence belongs to the OMP decarboxylase family. Type 2 subfamily.

It catalyses the reaction orotidine 5'-phosphate + H(+) = UMP + CO2. It participates in pyrimidine metabolism; UMP biosynthesis via de novo pathway; UMP from orotate: step 2/2. The protein is Orotidine 5'-phosphate decarboxylase of Janthinobacterium sp. (strain Marseille) (Minibacterium massiliensis).